Reading from the N-terminus, the 711-residue chain is BCLAF1 and THRAP3 family member 3 (711 aa).

Residues 1 to 15 (MARSRSRSPRWKHRS) are compositionally biased toward basic residues. Disordered regions lie at residues 1–42 (MARS…YRKD) and 48–67 (AWRMDSEKHGQSKPRIPSRG). Ser-15 and Ser-17 each carry phosphoserine. A compositionally biased stretch (basic and acidic residues) spans 48 to 57 (AWRMDSEKHG). Phosphoserine occurs at positions 78, 80, and 187. Disordered regions lie at residues 94–350 (KPHR…KDSI) and 371–404 (EKIKKEGDCRKESNSSSNQLDKSQKLPDVKPSPI). Composition is skewed to basic and acidic residues over residues 163 to 197 (FRFEGKWHEDELRHQRIQEEKYSQSTRRGSEDFET), 204 to 213 (RYPEDRDFRK), 220 to 242 (RPKDVERYESREPARNPKWKPEH), 296 to 311 (SDGRTQKYCKEEDRKY), 318 to 349 (LNRELDCFNTGRGRETQDGQVKEPFKPSKKDS), and 371 to 383 (EKIKKEGDCRKES). Lys-400 participates in a covalent cross-link: Glycyl lysine isopeptide (Lys-Gly) (interchain with G-Cter in SUMO2). A phosphoserine mark is found at Ser-402 and Ser-578.

Belongs to the BCLAF1/THRAP3 family.

The protein localises to the mitochondrion. The polypeptide is BCLAF1 and THRAP3 family member 3 (Homo sapiens (Human)).